Reading from the N-terminus, the 509-residue chain is ATP synthase subunit alpha (509 aa).

169-176 (GDRQTGKT) provides a ligand contact to ATP.

This sequence belongs to the ATPase alpha/beta chains family. F-type ATPases have 2 components, CF(1) - the catalytic core - and CF(0) - the membrane proton channel. CF(1) has five subunits: alpha(3), beta(3), gamma(1), delta(1), epsilon(1). CF(0) has three main subunits: a(1), b(2) and c(9-12). The alpha and beta chains form an alternating ring which encloses part of the gamma chain. CF(1) is attached to CF(0) by a central stalk formed by the gamma and epsilon chains, while a peripheral stalk is formed by the delta and b chains.

It is found in the cell inner membrane. The enzyme catalyses ATP + H2O + 4 H(+)(in) = ADP + phosphate + 5 H(+)(out). Functionally, produces ATP from ADP in the presence of a proton gradient across the membrane. The alpha chain is a regulatory subunit. The chain is ATP synthase subunit alpha from Xanthobacter autotrophicus (strain ATCC BAA-1158 / Py2).